We begin with the raw amino-acid sequence, 460 residues long: UDP-N-acetylmuramoylalanine--D-glutamate ligase (460 aa).

ATP is bound at residue glycine 122–threonine 128.

This sequence belongs to the MurCDEF family.

It localises to the cytoplasm. The enzyme catalyses UDP-N-acetyl-alpha-D-muramoyl-L-alanine + D-glutamate + ATP = UDP-N-acetyl-alpha-D-muramoyl-L-alanyl-D-glutamate + ADP + phosphate + H(+). It participates in cell wall biogenesis; peptidoglycan biosynthesis. Cell wall formation. Catalyzes the addition of glutamate to the nucleotide precursor UDP-N-acetylmuramoyl-L-alanine (UMA). This is UDP-N-acetylmuramoylalanine--D-glutamate ligase from Jannaschia sp. (strain CCS1).